The sequence spans 568 residues: MAEPDLLAPFADLPFPPGDDFPDFPTLGDDAFALEDFDLDDLDFDFDVDLFPPDAPPPVTTSSSSSAAGSPEAGTSSAGDGGSKNEESADSSSPSRSGSDGGGGKDGKDDEAKRRARLVRNRESAHQSRQRKKQYVEELEGKVKVMQATIADLTARISCVTAENAALKQQLGGAAGAGAAAPPPPMPMYPAVYPLPMPWIHPAYAMRGSQVPLVPIPRLKTQQPASTPEPPAKKARKTKKVAGVSLLGLLFLMMVCGCLVPAVNRMYGAAYTGEGAAIVPSHHGRILAVEGPQNSVSNGVDPKVPQNGSETLPALLYLPRNGKHVKINGNLVIKSIVASEKASSRLSNYGEKGSGNQGKEETSLAIPGYVAPLEAGEVMDSAKGMNELMALAPGDGSIYREDDGMLPQWFSEAMSGPMLNSGMCTEVFQFDLSPTTADANGIVPVYSGSVTNTSQNYTENLPSGPVQKVKNRRISYSEAIPLRGSTSNDTDHFKAPPKNHSQSHAGRKPVSSVVVSVLADPREASDRDGEGRISSNSLSRIFVVVLIDSVKYVTYSCVLPFKSHSPHL.

2 stretches are compositionally biased toward low complexity: residues 1-13 (MAEP…FADL) and 60-78 (TTSS…TSSA). Disordered regions lie at residues 1 to 29 (MAEP…TLGD) and 45 to 134 (DFDV…RKKQ). Topologically, residues 1 to 240 (MAEPDLLAPF…PAKKARKTKK (240 aa)) are cytoplasmic. Residues 103 to 113 (GGKDGKDDEAK) show a composition bias toward basic and acidic residues. Residues 111–171 (EAKRRARLVR…AENAALKQQL (61 aa)) enclose the bZIP domain. The tract at residues 113–144 (KRRARLVRNRESAHQSRQRKKQYVEELEGKVK) is basic motif. The segment at 150 to 157 (IADLTARI) is leucine-zipper. The chain crosses the membrane as a helical span at residues 241 to 261 (VAGVSLLGLLFLMMVCGCLVP). The Lumenal segment spans residues 262–568 (AVNRMYGAAY…LPFKSHSPHL (307 aa)). Residues N307, N452, N456, N488, and N499 are each glycosylated (N-linked (GlcNAc...) asparagine). The segment at 479–510 (AIPLRGSTSNDTDHFKAPPKNHSQSHAGRKPV) is disordered.

This sequence belongs to the bZIP family.

Its subcellular location is the endoplasmic reticulum membrane. It is found in the nucleus. Transcription factor involved in endoplasmic reticulum (ER) stress response. Acts as a ER stress sensor and activates the transcription factor BZIP50 and the chaperone BIP1. The chain is bZIP transcription factor 60 from Oryza sativa subsp. japonica (Rice).